The chain runs to 194 residues: dTTP/UTP pyrophosphatase (194 aa).

Catalysis depends on D73, which acts as the Proton acceptor.

This sequence belongs to the Maf family. YhdE subfamily. It depends on a divalent metal cation as a cofactor.

The protein resides in the cytoplasm. It carries out the reaction dTTP + H2O = dTMP + diphosphate + H(+). It catalyses the reaction UTP + H2O = UMP + diphosphate + H(+). Its function is as follows. Nucleoside triphosphate pyrophosphatase that hydrolyzes dTTP and UTP. May have a dual role in cell division arrest and in preventing the incorporation of modified nucleotides into cellular nucleic acids. This Geotalea uraniireducens (strain Rf4) (Geobacter uraniireducens) protein is dTTP/UTP pyrophosphatase.